Consider the following 267-residue polypeptide: Undecaprenyl-diphosphatase (267 aa).

The next 8 membrane-spanning stretches (helical) occupy residues 1-21 (MSYFEAFILALIQGLTEFLPI), 39-59 (QGLAFDVAVHVGTLMAVVIYF), 83-103 (AKLAWMIVIATIPACVFGLLM), 111-131 (LRSAYVIATTTIVFGLLLWWV), 144-164 (TGWKKAVFIGIAQALAMIPGT), 189-209 (FLMSIPIITLAGSYLGMKLVT), 218-238 (FLLTGILTSFISAYICIHFFL), and 245-265 (GMTPFVIYRLILGVGLFAFLL).

This sequence belongs to the UppP family.

It localises to the cell inner membrane. It carries out the reaction di-trans,octa-cis-undecaprenyl diphosphate + H2O = di-trans,octa-cis-undecaprenyl phosphate + phosphate + H(+). Functionally, catalyzes the dephosphorylation of undecaprenyl diphosphate (UPP). Confers resistance to bacitracin. The polypeptide is Undecaprenyl-diphosphatase (Vibrio parahaemolyticus serotype O3:K6 (strain RIMD 2210633)).